We begin with the raw amino-acid sequence, 103 residues long: Large ribosomal subunit protein bL21 (103 aa).

It belongs to the bacterial ribosomal protein bL21 family. In terms of assembly, part of the 50S ribosomal subunit. Contacts protein L20.

In terms of biological role, this protein binds to 23S rRNA in the presence of protein L20. In Acidovorax ebreus (strain TPSY) (Diaphorobacter sp. (strain TPSY)), this protein is Large ribosomal subunit protein bL21.